The primary structure comprises 635 residues: MSIILAKKSGFCYGVKRAVDTCLKIKQNYPDKIIYTLGPLIHNNDVVDFLKTKNIFSIGYENIDTLKEGDIIILRSHGVTLETIQKLKEKKLNIIDATCPYVSNIQKKAQKYYKEGYSILIVGDKNHPEVIGINGWCNNSAIICRKAEEIEDLPKKICVVSQTTEKKEHWISVLSKVVNECREVVAFNTICNATEVRQLSAEDLSKEVDFMIVIGSKSSSNTTKLYEICKNNCSNTIHIENAGELPDYISNKYSKIGVTAGASTPDWIIKEAIFKMSNKNLNEQLEYMENNDIQISIGQEVEGEIVSIVSSNEAYVNIGYKSDAILLLSEVTKDNDEDINNFVKKGDIIKGKIIKLGSENKPPVISVIELNRENAYVELKEAFENKEKVVVKVKEDVNGGLISIYKNIVRVFIPASHVELRHVDDLSIYKGCELTVNIIEFEEGRNNTRIVASRRDLLKEEQSKVEEETWSSLEKDTIKEGEVRRLTDFGAFVNINGVDGLLHVSEISWGRVEKPSDMLKVGDKIKVYIKDIDKDKKKLALSIKDLTKDPWKDVEVKYPVGNIVLGTVVRFASFGAFVELEPGVDGLIHISQISHKRVDRVEDELSIGEQVKAKIVEVDGEKRKIGLSIKEVNDI.

Residues 1–279 (MSIILAKKSG…KEAIFKMSNK (279 aa)) form a 4-hydroxy-3-methylbut-2-enyl diphosphate reductase region. [4Fe-4S] cluster is bound at residue cysteine 12. (2E)-4-hydroxy-3-methylbut-2-enyl diphosphate is bound by residues histidine 42 and histidine 77. 2 residues coordinate dimethylallyl diphosphate: histidine 42 and histidine 77. Isopentenyl diphosphate contacts are provided by histidine 42 and histidine 77. A [4Fe-4S] cluster-binding site is contributed by cysteine 99. A (2E)-4-hydroxy-3-methylbut-2-enyl diphosphate-binding site is contributed by histidine 127. Residue histidine 127 participates in dimethylallyl diphosphate binding. Residue histidine 127 participates in isopentenyl diphosphate binding. The active-site Proton donor is glutamate 129. Residue threonine 163 coordinates (2E)-4-hydroxy-3-methylbut-2-enyl diphosphate. Residue cysteine 191 coordinates [4Fe-4S] cluster. Positions 219, 220, 221, and 263 each coordinate (2E)-4-hydroxy-3-methylbut-2-enyl diphosphate. Serine 219, serine 220, asparagine 221, and serine 263 together coordinate dimethylallyl diphosphate. Serine 219, serine 220, asparagine 221, and serine 263 together coordinate isopentenyl diphosphate. S1 motif domains follow at residues 298–373 (GQEV…LNRE), 380–455 (KEAF…ASRR), 476–544 (DTIK…LSIK), and 561–630 (GNIV…LSIK).

It in the N-terminal section; belongs to the IspH family. The cofactor is [4Fe-4S] cluster.

The enzyme catalyses isopentenyl diphosphate + 2 oxidized [2Fe-2S]-[ferredoxin] + H2O = (2E)-4-hydroxy-3-methylbut-2-enyl diphosphate + 2 reduced [2Fe-2S]-[ferredoxin] + 2 H(+). The catalysed reaction is dimethylallyl diphosphate + 2 oxidized [2Fe-2S]-[ferredoxin] + H2O = (2E)-4-hydroxy-3-methylbut-2-enyl diphosphate + 2 reduced [2Fe-2S]-[ferredoxin] + 2 H(+). It functions in the pathway isoprenoid biosynthesis; dimethylallyl diphosphate biosynthesis; dimethylallyl diphosphate from (2E)-4-hydroxy-3-methylbutenyl diphosphate: step 1/1. Its pathway is isoprenoid biosynthesis; isopentenyl diphosphate biosynthesis via DXP pathway; isopentenyl diphosphate from 1-deoxy-D-xylulose 5-phosphate: step 6/6. Its function is as follows. Catalyzes the conversion of 1-hydroxy-2-methyl-2-(E)-butenyl 4-diphosphate (HMBPP) into a mixture of isopentenyl diphosphate (IPP) and dimethylallyl diphosphate (DMAPP). Acts in the terminal step of the DOXP/MEP pathway for isoprenoid precursor biosynthesis. This chain is 4-hydroxy-3-methylbut-2-enyl diphosphate reductase, found in Clostridium tetani (strain Massachusetts / E88).